The sequence spans 582 residues: Inositol transporter 4 (582 aa).

Transmembrane regions (helical) follow at residues 35–55, 70–90, 105–125, 128–148, 162–182, 188–208, 290–310, 317–337, 345–365, 456–476, 494–514, and 525–545; these read GIGG…LLFI, STIV…GGWI, VLFL…VIIV, IFVG…ISEA, GLLI…FVHT, WMLG…LSLP, FVGI…AGYA, ALSL…MMFV, LMII…TVFS, FGFL…PGMG, LGGG…SESF, and GTFL…WLLV.

The protein belongs to the major facilitator superfamily. Sugar transporter (TC 2.A.1.1) family. As to expression, highly expressed in pollen and phloem companion cells.

Its subcellular location is the cell membrane. Plasma membrane inositol-proton symporter. Mediates high-affinity myoinositol-proton symport across the plasma membrane. Active with myoinositol, scylloinositol and D-chiroinositol. Low activity with mucoinositol and alloinositol. The sequence is that of Inositol transporter 4 (INT4) from Arabidopsis thaliana (Mouse-ear cress).